Here is an 869-residue protein sequence, read N- to C-terminus: Structure-specific endonuclease subunit SLX4 (869 aa).

Residues 40-59 (SPLSLPSPTSLLDFLSTSTS) are compositionally biased toward low complexity. 7 disordered regions span residues 40–79 (SPLSLPSPTSLLDFLSTSTSRGPARSDTDGDKTQGKEVLD), 92–116 (NRVVSGTGGKAATGKKLKRRTESPG), 165–199 (KANQTVSLQPETKKSAPKGCNDTTQPADNGHINDL), 293–323 (GLSDSRQSSITEDSESATSKPRRVKAKNPPK), 351–388 (TLLSDEPGKEKNVAKRTSGARCAKPGRKKSATTEKKNE), 418–437 (ANGHSEDRHEQNEGTSHISN), and 630–774 (KTSN…ASET). Basic and acidic residues predominate over residues 63–79 (ARSDTDGDKTQGKEVLD). Polar residues-rich tracts occupy residues 165 to 174 (KANQTVSLQP) and 294 to 311 (LSDSRQSSITEDSESATS). Positions 312 to 322 (KPRRVKAKNPP) are enriched in basic residues. 2 stretches are compositionally biased toward polar residues: residues 647 to 657 (VDESTQGQSLG) and 664 to 673 (SIPQTATTQV). Over residues 688–700 (VPVPSRRSTSTSK) the composition is skewed to low complexity. Residues 765–774 (IPSTGTASET) are compositionally biased toward polar residues.

Belongs to the SLX4 family. In terms of assembly, forms a heterodimer with SLX1. Phosphorylated in response to DNA damage.

Its subcellular location is the nucleus. In terms of biological role, regulatory subunit of the SLX1-SLX4 structure-specific endonuclease that resolves DNA secondary structures generated during DNA repair and recombination. Has endonuclease activity towards branched DNA substrates, introducing single-strand cuts in duplex DNA close to junctions with ss-DNA. This is Structure-specific endonuclease subunit SLX4 from Paracoccidioides brasiliensis (strain Pb18).